The following is a 375-amino-acid chain: MDLRESDGAVWAVGLMSGTSMDGIDAALLRTDGHQVFEVGPALTVAYDEATRARIRALLGTPPGRSVAEVADLARDLTERHAEVAARLIGQSGVTPAVVGFHGQTLLHRPEARLSVQIGDGALLARRLGVAVVNDLRQADVRAGGQGAPLVPAYHLALAKGLARPLAVLNLGGVGNVTWIGEGDQPPVAFDTGPGNALIDDWMRRRRGVAMDADGALARSGRIDGAALEALLGHDYFRKPAPKSLDRDAFSLEPVNGLSDGDGAATLVAFTAASVARARDWMPAPPKRWLVCGGGRRNGAIMEALTRGLGVAVDPVEAVGWDGDALEAQAFAFLAVRGARGLPLTWPTTTGAPRPLTGGTYWPAATVLGASAVAR.

18–25 is an ATP binding site; sequence GTSMDGID.

This sequence belongs to the anhydro-N-acetylmuramic acid kinase family.

It catalyses the reaction 1,6-anhydro-N-acetyl-beta-muramate + ATP + H2O = N-acetyl-D-muramate 6-phosphate + ADP + H(+). It participates in amino-sugar metabolism; 1,6-anhydro-N-acetylmuramate degradation. Its pathway is cell wall biogenesis; peptidoglycan recycling. In terms of biological role, catalyzes the specific phosphorylation of 1,6-anhydro-N-acetylmuramic acid (anhMurNAc) with the simultaneous cleavage of the 1,6-anhydro ring, generating MurNAc-6-P. Is required for the utilization of anhMurNAc either imported from the medium or derived from its own cell wall murein, and thus plays a role in cell wall recycling. The sequence is that of Anhydro-N-acetylmuramic acid kinase from Rhodospirillum rubrum (strain ATCC 11170 / ATH 1.1.1 / DSM 467 / LMG 4362 / NCIMB 8255 / S1).